Reading from the N-terminus, the 336-residue chain is MSLGAADVGAGAGPPGQHAGAVDNWPVAIIGSGVVGTDLMSRIGNGDGRLRVSAMVGTNPHCDGLARAAAAGISTSPGGVDGLLSMPEFANIRLVFDTTNPGAHQSNWARLADTGVRMLDLTASAIGPCCVPAVNLDAQLDAPNLSMATCSAQAAVPIVAAVRRHGVVRYAEVVSAIASQALGPAERVTLDEFAELTTTAVQELGGARRAKTLTIVNPADPPMPMRTTVFCLVDQADEVARNEADVLAVVDGVQALLPGYRLKHRVQFERLGSGNTLYIPGTGEFGGTRITVLLEITAAGGYLPACAGNVAIVTSAAKATAEAIVERHAQTLKAKI.

Residue 32-35 (SGVV) coordinates NAD(+). The Acyl-thioester intermediate role is filled by Cys-150. Residue Asn-309 coordinates NAD(+).

It belongs to the acetaldehyde dehydrogenase family.

It catalyses the reaction acetaldehyde + NAD(+) + CoA = acetyl-CoA + NADH + H(+). The polypeptide is Acetaldehyde dehydrogenase 1 (mhpF) (Mycobacterium ulcerans (strain Agy99)).